The following is a 296-amino-acid chain: Ribosomal RNA small subunit methyltransferase A (296 aa).

S-adenosyl-L-methionine is bound by residues asparagine 30, leucine 32, glycine 57, glutamate 78, aspartate 103, and asparagine 128.

It belongs to the class I-like SAM-binding methyltransferase superfamily. rRNA adenine N(6)-methyltransferase family. RsmA subfamily.

The protein resides in the cytoplasm. It catalyses the reaction adenosine(1518)/adenosine(1519) in 16S rRNA + 4 S-adenosyl-L-methionine = N(6)-dimethyladenosine(1518)/N(6)-dimethyladenosine(1519) in 16S rRNA + 4 S-adenosyl-L-homocysteine + 4 H(+). Functionally, specifically dimethylates two adjacent adenosines (A1518 and A1519) in the loop of a conserved hairpin near the 3'-end of 16S rRNA in the 30S particle. May play a critical role in biogenesis of 30S subunits. This Staphylococcus carnosus (strain TM300) protein is Ribosomal RNA small subunit methyltransferase A.